The sequence spans 431 residues: MGKNVVVLGTQWGDEGKGKIVDLLTEQAKYVVRYQGGHNAGHTLVIDGDKTVLHLIPSGILRDNVKCIIGNGVVLAPDALMTEINMLKERGVPVEERLLISEACPLILPFHCALDMAREKARGNKAIGTTGRGIGPAYEDKVSRRGLRVGDLFNAELFAEKLKEVMAYHNFMLTEYYKCEAVDYEETLKDALAIADYLKSMCTDVSELLDQARKAGEPILFEGAQGTLLDIDHGTYPFVTSSNTTAGGVATGSGFGPRHLDYVLGIMKAYTTRVGAGPFPTELENEIGDYLGTKGHEFGATTGRKRRPGWLDIVAMKRAVQINSVSGFCLTKLDVLDGLEEVKICVGYQYPDGTVATTTPLAAEGYEQVTPVLETMPGWSETTFGATSVEQLPQAAMNYIKRLEELLETPIDIISTGPDRNETMILVNPFS.

Residues 13 to 19 and 41 to 43 contribute to the GTP site; these read GDEGKGK and GHT. The active-site Proton acceptor is the aspartate 14. Mg(2+) is bound by residues aspartate 14 and glycine 41. IMP is bound by residues 14–17, 39–42, threonine 130, arginine 144, glutamine 225, threonine 240, and arginine 304; these read DEGK and NAGH. Histidine 42 functions as the Proton donor in the catalytic mechanism. 300 to 306 is a binding site for substrate; the sequence is ATTGRKR. GTP-binding positions include arginine 306, 332 to 334, and 415 to 417; these read KLD and STG.

Belongs to the adenylosuccinate synthetase family. In terms of assembly, homodimer. Mg(2+) is required as a cofactor.

Its subcellular location is the cytoplasm. It catalyses the reaction IMP + L-aspartate + GTP = N(6)-(1,2-dicarboxyethyl)-AMP + GDP + phosphate + 2 H(+). It participates in purine metabolism; AMP biosynthesis via de novo pathway; AMP from IMP: step 1/2. Plays an important role in the de novo pathway of purine nucleotide biosynthesis. Catalyzes the first committed step in the biosynthesis of AMP from IMP. This chain is Adenylosuccinate synthetase, found in Shewanella piezotolerans (strain WP3 / JCM 13877).